Reading from the N-terminus, the 84-residue chain is U1-hexatoxin-Iw1a (84 aa).

A signal peptide spans 1 to 18 (MLKFVVVICLVIMAITFA). 5 disulfide bridges follow: Cys21/Cys32, Cys26/Cys40, Cys31/Cys66, Cys50/Cys74, and Cys68/Cys81.

It belongs to the MIT-like AcTx family. As to expression, expressed by the venom gland.

Its subcellular location is the secreted. The protein is U1-hexatoxin-Iw1a of Illawarra wisharti (Illawarra funnel-web spider).